The following is a 59-amino-acid chain: Potassium channel toxin alpha-KTx 16.4 (59 aa).

An N-terminal signal peptide occupies residues 1–22; that stretch reads MKILSIVLIALIICSISICTEA. Intrachain disulfides connect Cys-30/Cys-51, Cys-36/Cys-56, and Cys-40/Cys-58.

Belongs to the short scorpion toxin superfamily. Potassium channel inhibitor family. Alpha-KTx 16 subfamily. Expressed by the venom gland.

The protein localises to the secreted. Functionally, weak inhibitor of voltage-gated potassium channel hKv1.3/KCNA3. The sequence is that of Potassium channel toxin alpha-KTx 16.4 from Mesobuthus eupeus (Lesser Asian scorpion).